Here is a 2588-residue protein sequence, read N- to C-terminus: MSFKNNEKYMDEENDQESDDEFFKVKRKPQINVDAEEDEDNNNNNNNNNNNSNISNHMNEFDLEEEDEDDYEDENYIVGETIEIDESKLKNEKIEEDIFNENNLLHGIKTRELLEQEILILFSNMLKKETILCKDIKSGSNDPMDEISLFKDDMVDDKELKDFEKSSLKIKNKEVYNFIYNKMNLHIKENKKKDEKEKKNKIHNNDENNNMIYYKNIDKTHYILDNNVVHILNDINTYLKRERDYMNRKFGTYIDSTYKNPMYVTLYIFNNDILKDIILQVIDIIRNDFDHAIYKDIDENQLIKNLIILINHLTTRPSKEWFDYWKRHMPTFNDKKSEYNVYKYLQLQKSDRRILYDTLKNDIYIKELQKRSDILDQYQKGLQSLKCLLANKNFLTMLNEFRYNTQLFIDADYREIEENEKVMEMQRRENELLEEKKRLKQELESYHDDSSTDDDSSADEQQDERREVLTHNDPINKKDDPINKNDDPINKNDDPINKNDDNINKNDDNINKNDDNICNSNDHTHNSNDHTHNSNDHTHNSNDHTHNSNDHTHFSNDHTHFSNDHTHFSNDHTHFSNDHTHNSNDHTHNSKNHAHFSNEVDKTNDYKYHSEKKKKNNVIRSKMYNIKKRISKINDELHELSNFFLIDKTKREKLMFEYNENVFLVRNILTQVLGIRNKTDNRDINLNNVHYAILQNILDKHGCLHLIIDEMRDLFEKEIKKYEEESNIYIPYIKQNTMKQIWEYIRLFYNIICYIDPIDLVKSLTYQKSTHIIKKEKKKTKTDMDNNNNNNNNNNNDNNNIMMNQKFLNNYHNKKHLNTSDNVNNMKTNNLRNYNKDINLKNVGKDMNKRKSMAQQQNKRKSNYINIKQKNLMITHLSRINPLLAKSKVRKPNEEKHLKKRKRKFIERKNLIDHYEIFSFEDFSFNMFSEDRLFNKYNILDIFDYSNLYKIQDFLNNIIGINEEFESIYENDDNFHYSLKVFLNICIKDLRRCINEFYNFQWDIKIILNMHAWIVTYYTNLYIYENRKRFYNSRNKNKNNKEHQMNRDDERKCTKEYTNQNEGEMKYDHNRKREDEQKNHKYCNINCNINCNINCNKNCNKNCNINYNNGDNNVYDNNVYDNNDDYNDDYNDDYNDDYNDDYNDVNQNTYVKHNNQNENSSLFISRIQMVLGLQMYIGDNSIHSEFLCDTFQRVIREEKMMKNSSQVILCCLRCLYSDLNLLDIHSLSTDENVKSICKTSLDNLLKRNILTTLSWILQNFKILSHEKHIFIYSLKCSLLIINLLAKLGGTTYIIKEKKNIHNDSHDDNNDDSVNDSNDDTNNVNVNVNVNDYYDDDDDDNNNNNRIDKKKKHKKKKYNNEPMEKIDVSDLVEEIFNGKIVNICMHILENFKRNSLYINDLIITYFEHLIKHKNNEYNFLIFFDIKYFLIFKDIINDPEAYNNPHYYWIPCFFENIIACFFKIWKSNYFIVNELLFTKDINKNNSNLLNEKYLLSIFSNYNEGNDPFIFQQLNEGIYINDIFINLNNKKRLESLEWSNEDIENLKFYFKQFKHMHNFLPFISEMLNKSSNVVKNQLIYLNYLDKRGKVIYDDQYESDNMISSSSSSSSSSSSSSSLSSSSSLSCVSYLSEAQNSNNKSNDSLKMSYSKKKKQHTNEHMNHHQNYPMRKTKQPLLYIIYKLKKLNYNNNNNNNNNNNNNDDNTKDQPKLTVNEINCNVDTVLEEINVNLKSLYELKKLSKNKIFNNKALAFDIPLSISPDLLEHHYFKKLLKHIGFLYNQNVDEWILNENLDIDIFKKTIDKFEQLYIMDIQKLKKKLSSHKLNVQTNDQGERQDERNIDHEDEPVSSNTEDDHEENDYFTYDHIDERDHKKCDDKKYSDNTNETYDDQKCDDNTNETYDNEKCDEAINNKHMDEQELHLRSPSIKTKGTLKLLKLMYEFFISNDDECRLFFNNLINTIKEKCIIIFEKLKKCKLDHDILYKDTTNNYYDHTSHPVQICFEDYKIYLNNNEKSILKGRCKHKNILEELLEILGLYISNVPCLIISKHIKEEEFYERITTINDHKTLSLNDLNMIITTKEKEIKEKKKKKKEERKPSAHQKFAFIKSICEYLNYNYIIRNTYKSEQNTNNHNDNNIIYNNTYSKLKDTYFGDDKLLTALYDKLNIWNNRRKKKNDDMVLEIPIPQFVGSMCNVGTSEGEHEQKLDESKNIYTKEYNNDEKFLKSHINCQDDTQKISSLVIHIGICLKGEYHDESILKWTCEQIHREWMKIMLKLFYNILYDTTYNVIGKLFKEYKNIKEILNDQSSDFLDMYKSDKKKKKKKKELDDVEKEGQPKMGVGNDDNINGDKNIYDDNINGDDNINGDKNIYDDDKNIYDDDDNINGDKNIYDGNYKISYSKEYEHIHMDEKKEVEKEYHIYDNNNNNDNNNDNNNDNNNNSHTLAFQNRTQGETTFTNINNITNDICEKGNKYTSNVNNINNINEMTCKESVEVNEIIQKTNKRKFHNIELKEHYCYDLFKKRKLENTYRNTYKKNRKIIINCLLTNKNIFQYKEHDIVNKVKQIFIKAKHMATNGDLRNRWKSREDVKKILLL.

Residues 1 to 11 (MSFKNNEKYMD) are compositionally biased toward basic and acidic residues. 9 disordered regions span residues 1-56 (MSFK…NISN), 442-598 (ELES…HFSN), 774-801 (KKEK…NNNI), 1303-1357 (DSHD…KKKY), 1631-1662 (QNSN…HHQN), 1685-1705 (NNNN…KDQP), 1820-1856 (KLNV…EEND), 2317-2342 (KKKK…DNIN), and 2415-2437 (YDNN…NSHT). Residues 42–56 (NNNNNNNNNNSNISN) show a composition bias toward low complexity. The stretch at 413–452 (YREIEENEKVMEMQRRENELLEEKKRLKQELESYHDDSST) forms a coiled coil. A compositionally biased stretch (acidic residues) spans 451–462 (STDDDSSADEQQ). Basic and acidic residues-rich tracts occupy residues 463-515 (DERR…KNDD) and 522-588 (DHTH…DHTH). Over residues 785 to 801 (DNNNNNNNNNNNDNNNI) the composition is skewed to low complexity. Over residues 1308 to 1318 (NNDDSVNDSND) the composition is skewed to acidic residues. Over residues 1319–1331 (DTNNVNVNVNVND) the composition is skewed to low complexity. A compositionally biased stretch (basic residues) spans 1347 to 1356 (DKKKKHKKKK). The span at 1631–1643 (QNSNNKSNDSLKM) shows a compositional bias: polar residues. Over residues 1685–1698 (NNNNNNNNNNNNND) the composition is skewed to low complexity. Positions 1828 to 1838 (QGERQDERNID) are enriched in basic and acidic residues. Residues 1839 to 1856 (HEDEPVSSNTEDDHEEND) show a composition bias toward acidic residues. The segment covering 2416 to 2434 (DNNNNNDNNNDNNNDNNNN) has biased composition (low complexity).

This is an uncharacterized protein from Plasmodium falciparum (isolate 3D7).